Reading from the N-terminus, the 135-residue chain is Snaclec rhodocetin subunit gamma (135 aa).

Intrachain disulfides connect Cys4/Cys15, Cys32/Cys129, and Cys104/Cys121. The C-type lectin domain occupies 11-130 (YDQHCYQAFN…CQAKNPFVCK (120 aa)).

This sequence belongs to the snaclec family. As to quaternary structure, heterotetramer of subunit alpha, beta, gamma and delta; only the gamma and the delta subunits are disulfide-linked. Alpha-beta heterodimer and gamma-delta heterodimer associate orthogonally, giving a cruciform conformation. This heterotetramer may covalently dimerizes thanks to the gamma subunit. As to expression, expressed by the venom gland.

It is found in the secreted. Its function is as follows. Potent inhibitor of collagen-induced platelet aggregation. It acts by binding to the integrin alpha2A domain and blocks collagen binding to integrin alpha-2/beta-1 (ITGA2/ITGB1). The gamma/delta subunits mainly contribute to this activity. The chain is Snaclec rhodocetin subunit gamma from Calloselasma rhodostoma (Malayan pit viper).